The chain runs to 190 residues: ATP-dependent Clp protease proteolytic subunit 2 (190 aa).

Residue serine 98 is the Nucleophile of the active site. Residue histidine 123 is part of the active site.

This sequence belongs to the peptidase S14 family. As to quaternary structure, fourteen ClpP subunits assemble into 2 heptameric rings which stack back to back to give a disk-like structure with a central cavity, resembling the structure of eukaryotic proteasomes.

The protein resides in the cytoplasm. The catalysed reaction is Hydrolysis of proteins to small peptides in the presence of ATP and magnesium. alpha-casein is the usual test substrate. In the absence of ATP, only oligopeptides shorter than five residues are hydrolyzed (such as succinyl-Leu-Tyr-|-NHMec, and Leu-Tyr-Leu-|-Tyr-Trp, in which cleavage of the -Tyr-|-Leu- and -Tyr-|-Trp bonds also occurs).. In terms of biological role, cleaves peptides in various proteins in a process that requires ATP hydrolysis. Has a chymotrypsin-like activity. Plays a major role in the degradation of misfolded proteins. This Bacillus licheniformis (strain ATCC 14580 / DSM 13 / JCM 2505 / CCUG 7422 / NBRC 12200 / NCIMB 9375 / NCTC 10341 / NRRL NRS-1264 / Gibson 46) protein is ATP-dependent Clp protease proteolytic subunit 2.